We begin with the raw amino-acid sequence, 1129 residues long: Protein DWARF 53-LIKE (1129 aa).

The region spanning 8–180 (ARQCLSPAAV…KLAILRPAPP (173 aa)) is the Clp R domain. Repeat stretches follow at residues 12–85 (LSPA…LDRL) and 102–180 (VSNS…PAPP). The tract at residues 519–573 (RYIGVPADKERSANPSKGSESIGVQKDVIKPCAVSAVHSSSTARPISSPSVTNKR) is disordered. Over residues 557 to 568 (SSSTARPISSPS) the composition is skewed to low complexity. The EAR 1 motif lies at 577–581 (LVLNL). The segment at 587-654 (KSDENLQERG…KRVEDSERSV (68 aa)) is disordered. The segment covering 596–608 (GMQSQHGTLSNAD) has biased composition (polar residues). A compositionally biased stretch (basic and acidic residues) spans 645-654 (KRVEDSERSV). Short sequence motifs (EAR) lie at residues 798 to 802 (LDLNL) and 975 to 980 (FDLNLP). The interval 975–1001 (FDLNLPVDEDEPFDADDDSSSHENSYG) is disordered. The segment covering 981–992 (VDEDEPFDADDD) has biased composition (acidic residues).

The protein belongs to the ClpA/ClpB family. In terms of processing, polyubiquitinated. Strigolactone, but not karrikin, triggers rapid SCF(D3)-dependent degradation via the proteasome.

In terms of biological role, repressor of strigolactones (SL) signaling. Subjected to a negative feedback control of SL signaling. The protein is Protein DWARF 53-LIKE of Oryza sativa subsp. japonica (Rice).